A 220-amino-acid polypeptide reads, in one-letter code: Redox-sensing transcriptional repressor Rex (220 aa).

A DNA-binding region (H-T-H motif) is located at residues 25–64 (WYLSNVKLLKQRGERFVSSTQISKEINIDASQIAKDLSYV). 99-104 (GVGSLG) is a binding site for NAD(+).

It belongs to the transcriptional regulatory Rex family. In terms of assembly, homodimer.

The protein localises to the cytoplasm. Functionally, modulates transcription in response to changes in cellular NADH/NAD(+) redox state. This Bacteroides thetaiotaomicron (strain ATCC 29148 / DSM 2079 / JCM 5827 / CCUG 10774 / NCTC 10582 / VPI-5482 / E50) protein is Redox-sensing transcriptional repressor Rex.